Here is a 115-residue protein sequence, read N- to C-terminus: UPF0127 protein PH1112 (115 aa).

It belongs to the UPF0127 family.

The polypeptide is UPF0127 protein PH1112 (Pyrococcus horikoshii (strain ATCC 700860 / DSM 12428 / JCM 9974 / NBRC 100139 / OT-3)).